The primary structure comprises 312 residues: Acetyl-coenzyme A carboxylase carboxyl transferase subunit alpha (312 aa).

The 251-residue stretch at 36–286 (RLDKEVKSIY…KEYFLDALRT (251 aa)) folds into the CoA carboxyltransferase C-terminal domain.

The protein belongs to the AccA family. Acetyl-CoA carboxylase is a heterohexamer composed of biotin carboxyl carrier protein (AccB), biotin carboxylase (AccC) and two subunits each of ACCase subunit alpha (AccA) and ACCase subunit beta (AccD).

The protein localises to the cytoplasm. It carries out the reaction N(6)-carboxybiotinyl-L-lysyl-[protein] + acetyl-CoA = N(6)-biotinyl-L-lysyl-[protein] + malonyl-CoA. The protein operates within lipid metabolism; malonyl-CoA biosynthesis; malonyl-CoA from acetyl-CoA: step 1/1. Its function is as follows. Component of the acetyl coenzyme A carboxylase (ACC) complex. First, biotin carboxylase catalyzes the carboxylation of biotin on its carrier protein (BCCP) and then the CO(2) group is transferred by the carboxyltransferase to acetyl-CoA to form malonyl-CoA. The polypeptide is Acetyl-coenzyme A carboxylase carboxyl transferase subunit alpha (Helicobacter pylori (strain Shi470)).